A 338-amino-acid chain; its full sequence is Cytoskeleton protein RodZ (338 aa).

At 1–111 (MNTEATHEEN…LGKSRKKRDG (111 aa)) the chain is on the cytoplasmic side. An HTH cro/C1-type domain is found at 19–71 (LRLAREQLGLSQQVVAERLCLKVSTVRDIEEDKAPADLASTFLRGYIRSYARL). A DNA-binding region (H-T-H motif) is located at residues 30–49 (QQVVAERLCLKVSTVRDIEE). The helical; Signal-anchor for type II membrane protein transmembrane segment at 112-132 (WLMSFTWLVLFVVVGLTGAWW) threads the bilayer. Residues 133-338 (WQNHKAQQEE…TLNAEQSVTQ (206 aa)) lie on the Periplasmic side of the membrane. 2 stretches are compositionally biased toward polar residues: residues 147–180 (ADQSSAELSQNAANSPQSVPLNTDNTADASQDQA) and 189–214 (GDTQNTASNNPQPTPVPSSNTASQQP). The interval 147–245 (ADQSSAELSQ…AQSQLPVGQA (99 aa)) is disordered. Low complexity predominate over residues 220-239 (SQANTDTAAQQNTTQPAQSQ).

It belongs to the RodZ family.

It localises to the cell inner membrane. In terms of biological role, cytoskeletal protein that is involved in cell-shape control through regulation of the length of the long axis. The protein is Cytoskeleton protein RodZ of Cronobacter sakazakii (strain ATCC BAA-894) (Enterobacter sakazakii).